The chain runs to 445 residues: 6-phosphogluconate dehydrogenase, decarboxylating (445 aa).

NADP(+) contacts are provided by residues 1–4 (AVMG), 22–24 (NRS), 63–65 (VKA), and Asn-91. Residues Asn-91 and 117-119 (SGG) contribute to the substrate site. Lys-172 functions as the Proton acceptor in the catalytic mechanism. 175–176 (HN) provides a ligand contact to substrate. Glu-179 functions as the Proton donor in the catalytic mechanism. Substrate is bound by residues Tyr-180, Lys-249, Arg-276, Arg-434, and His-440.

The protein belongs to the 6-phosphogluconate dehydrogenase family. As to quaternary structure, homodimer.

It carries out the reaction 6-phospho-D-gluconate + NADP(+) = D-ribulose 5-phosphate + CO2 + NADPH. Its pathway is carbohydrate degradation; pentose phosphate pathway; D-ribulose 5-phosphate from D-glucose 6-phosphate (oxidative stage): step 3/3. Catalyzes the oxidative decarboxylation of 6-phosphogluconate to ribulose 5-phosphate and CO(2), with concomitant reduction of NADP to NADPH. This Raoultella planticola (Klebsiella planticola) protein is 6-phosphogluconate dehydrogenase, decarboxylating (gnd).